An 804-amino-acid chain; its full sequence is MSFSHQEIEKKWQAFWEENKTFKTDEQAEGPHFYALDMFPYPSGAGLHVGHPEGYTATDILARMKRMQGYNVLHPMGWDAFGLPAEQYALDTGKHPATFTKQNIDTFKRQIKELGFSYDWDREISTTDPHYYKWTQWIFLKLYEKGLAYIDEVAVNWCPALGTVLANEEIVDGVSERGGHPVERRPMKQWVLRITAYAERLLEDLEELEWPESLKDMQRNWIGKSEGAEVTFKINEHSVNVFTTRPDTLFGATYMVLAPEHKLVTEITTDEQKEAVEAYQKQVALKSDIERTDLAKEKTGAFTGAYAINPVNGEKIPVWIADYVLISYGTGAVMAVPAHDERDFEFANAFGLPIKEVVAGGDVSKAAYTGDGEHVNSDFLNGLNKQEAVEKMIVWLEENGAGQRKVTYRLRDWLFSRQRYWGEPIPIIHWEDGSMSALDESELPLVLPDLEEIKPSGTGESPLANAKDWLEVVDPKTGMRGRRETNTMPQWAGSCWYYLRYIDPTNDEALADPEKLKNWLPVDTYIGGAEHAVLHLLYARFWHKFLYDIGVVPTKEPFQKVFNQGMILGENNEKMSKSKGNVVNPDEIIASHGADTLRLYEMFMGPLDASVAWSTNGLDGSRRFLERVWRLIVNEETGKLNSNVKDVEGNEAFVRTYHQTVKKVTEDFAELRFNTGISQLMVFVNEGNKQEVLPKALIEGFVKLLSPVAPHIAEELWEKLGHTDTITYEAWPTYDESLLVENEVEVVVQMNGKVKTKLVINKGASKEEMEAAALADEKVQAAIGEKTIRKVIAVPGKLVNIVVG.

Positions 40-51 (PYPSGAGLHVGH) match the 'HIGH' region motif. A 'KMSKS' region motif is present at residues 574–578 (KMSKS). Residue K577 coordinates ATP.

Belongs to the class-I aminoacyl-tRNA synthetase family.

It is found in the cytoplasm. The enzyme catalyses tRNA(Leu) + L-leucine + ATP = L-leucyl-tRNA(Leu) + AMP + diphosphate. The sequence is that of Leucine--tRNA ligase from Shouchella clausii (strain KSM-K16) (Alkalihalobacillus clausii).